The sequence spans 182 residues: Protein Syd (182 aa).

Belongs to the Syd family.

The protein resides in the cell inner membrane. Interacts with the SecY protein in vivo. May bind preferentially to an uncomplexed state of SecY, thus functioning either as a chelating agent for excess SecY in the cell or as a regulatory factor that negatively controls the translocase function. The chain is Protein Syd from Aeromonas hydrophila subsp. hydrophila (strain ATCC 7966 / DSM 30187 / BCRC 13018 / CCUG 14551 / JCM 1027 / KCTC 2358 / NCIMB 9240 / NCTC 8049).